A 477-amino-acid polypeptide reads, in one-letter code: Cyclin-A1-2 (477 aa).

The protein belongs to the cyclin family. Cyclin AB subfamily.

The polypeptide is Cyclin-A1-2 (CYCA1-2) (Oryza sativa subsp. japonica (Rice)).